We begin with the raw amino-acid sequence, 465 residues long: Nucleolar and spindle-associated protein 1 (465 aa).

The stretch at 32 to 61 forms a coiled coil; that stretch reads ADKLLRALKAHLKNEARKENENQDEIQTSA. 3 disordered regions span residues 44–123, 148–207, and 252–294; these read KNEA…QNHS, VEVP…TPNF, and GVPA…GSAK. Positions 56–75 are enriched in polar residues; sequence EIQTSASSCDEPEIQTSSQE. A compositionally biased stretch (basic and acidic residues) spans 76-86; the sequence is QAEREPDDHVT. A compositionally biased stretch (basic residues) spans 87 to 96; it reads KTRGRRKTVH. At Ser152 the chain carries Phosphoserine. Over residues 154-166 the composition is skewed to polar residues; sequence PNESQGDENTVSS. Basic and acidic residues predominate over residues 169 to 179; sequence HGIDGNEDPRV. Thr204 is subject to Phosphothreonine. Residues 262–405 form an interaction with microtubules region; it reads GRLSVACTPG…HKGKLKPWGQ (144 aa). Ser265 carries the post-translational modification Phosphoserine. Thr269 is modified (phosphothreonine). Phosphoserine is present on residues Ser272, Ser292, Ser299, and Ser334. The interval 308-338 is disordered; the sequence is SAATKDNEHKRSLTKTPARKSPHVTTSVNTP. Residues Thr337, Thr361, and Thr372 each carry the phosphothreonine modification. Residues Ser375 and Ser386 each carry the phosphoserine modification. Residues 396-454 form a disordered region; the sequence is HKGKLKPWGQSKENNSLHEHVNRVSFHKKTYKQPRLQTREEQRKKHERERKEKKEKVLG. The short motif at 407–413 is the KEN box element; that stretch reads KENNSLH. Positions 430–457 form a coiled coil; it reads RLQTREEQRKKHERERKEKKEKVLGVRR. Positions 432-453 are enriched in basic and acidic residues; it reads QTREEQRKKHERERKEKKEKVL.

The protein belongs to the NUSAP family. In terms of assembly, interacts with DNA and microtubules. Microtubule bundling is inhibited by IPO7, KPNA2 and KPNB1 while association with DNA is also inhibited by IPO7 and KPNA2. Ubiquitinated. Ubiquitination by FZR1 may lead to proteasome-dependent degradation of this protein.

It localises to the cytoplasm. It is found in the nucleus. The protein resides in the nucleolus. The protein localises to the cytoskeleton. Its subcellular location is the spindle. It localises to the chromosome. Its function is as follows. Microtubule-associated protein with the capacity to bundle and stabilize microtubules. May associate with chromosomes and promote the organization of mitotic spindle microtubules around them. The chain is Nucleolar and spindle-associated protein 1 (NUSAP1) from Bos taurus (Bovine).